Reading from the N-terminus, the 506-residue chain is Cobyric acid synthase (506 aa).

One can recognise a GATase cobBQ-type domain in the interval 251–448 (DITIAIVQLP…LHGLFDSDAF (198 aa)). Cys332 acts as the Nucleophile in catalysis. The active site involves His440.

Belongs to the CobB/CobQ family. CobQ subfamily.

It functions in the pathway cofactor biosynthesis; adenosylcobalamin biosynthesis. Its function is as follows. Catalyzes amidations at positions B, D, E, and G on adenosylcobyrinic A,C-diamide. NH(2) groups are provided by glutamine, and one molecule of ATP is hydrogenolyzed for each amidation. The protein is Cobyric acid synthase of Salmonella dublin (strain CT_02021853).